A 565-amino-acid polypeptide reads, in one-letter code: E3 ubiquitin-protein ligase ipaH7.8 (565 aa).

Residues 1–22 (MFSVNNTHSSVSCSPSINSNST) are disordered. An interaction with target proteins region spans residues 1-262 (MFSVNNTHSS…YHGPQIYFSM (262 aa)). The span at 9 to 22 (SSVSCSPSINSNST) shows a compositional bias: low complexity. LRR repeat units follow at residues 58–79 (QEAVLNLSDLNLTSLPELPKHI), 80–97 (SALIVENNKLTSLPKLPA), 98–119 (FLKELNADNNRLSVIPELPESL), 120–137 (TTLSVRSNQLENLPVLPN), 138–157 (HLTSLFVENNRLYNLPALPE), 158–179 (KLKFLHVYYNRLTTLPDLPDKL), 180–199 (EILCAQRNNLVTFPQFSDRN), 202–223 (RQKEYYFHFNQITTLPESFSQL), and 225–248 (SSYRINISGNPLSTRVLQSLQRLT). Residues 263–270 (SDGQQNTL) are linker. The interval 271-565 (HRPLADAVTA…SENGSRLHHS (295 aa)) is E3 ubiquitin-protein ligase catalytic domain. Residues 273-565 (PLADAVTAWF…SENGSRLHHS (293 aa)) enclose the NEL domain. The active-site Glycyl thioester intermediate is C357.

It belongs to the LRR-containing bacterial E3 ligase family. Ubiquitinated in the presence of host E1 ubiquitin-activating enzyme, E2 ubiquitin-conjugating enzyme and ubiquitin.

Its subcellular location is the secreted. It is found in the host cytoplasm. The catalysed reaction is S-ubiquitinyl-[E2 ubiquitin-conjugating enzyme]-L-cysteine + [acceptor protein]-L-lysine = [E2 ubiquitin-conjugating enzyme]-L-cysteine + N(6)-ubiquitinyl-[acceptor protein]-L-lysine.. It functions in the pathway protein modification; protein ubiquitination. Its function is as follows. E3 ubiquitin ligase effector protein that interferes with host's innate immunity. Functions to alter host cell physiology and promote bacterial survival in host tissues. Catalyzes ubiquitination of human gasdermins GSDMB and GSDMD, promoting their degradation by the proteasome, thereby preventing cell death. In contrast, activates host cell pyroptosis in mouse cells: catalyzes ubiquitination of mouse Nlrp1b allele 1 protein, releasing the cleaved C-terminal part of Nlrp1b, which polymerizes and forms the Nlrp1b inflammasome followed by host cell pyroptosis. Does not catalyze ubiquitination of mouse GSDMD. The sequence is that of E3 ubiquitin-protein ligase ipaH7.8 from Shigella flexneri.